A 392-amino-acid chain; its full sequence is NADH-quinone oxidoreductase subunit D (392 aa).

It belongs to the complex I 49 kDa subunit family. In terms of assembly, NDH-1 is composed of 14 different subunits. Subunits NuoB, C, D, E, F, and G constitute the peripheral sector of the complex.

The protein resides in the cell inner membrane. It carries out the reaction a quinone + NADH + 5 H(+)(in) = a quinol + NAD(+) + 4 H(+)(out). In terms of biological role, NDH-1 shuttles electrons from NADH, via FMN and iron-sulfur (Fe-S) centers, to quinones in the respiratory chain. The immediate electron acceptor for the enzyme in this species is believed to be ubiquinone. Couples the redox reaction to proton translocation (for every two electrons transferred, four hydrogen ions are translocated across the cytoplasmic membrane), and thus conserves the redox energy in a proton gradient. The protein is NADH-quinone oxidoreductase subunit D of Rhodospirillum rubrum (strain ATCC 11170 / ATH 1.1.1 / DSM 467 / LMG 4362 / NCIMB 8255 / S1).